The sequence spans 326 residues: Phenylalanine--tRNA ligase alpha subunit (326 aa).

A Mg(2+)-binding site is contributed by E251.

Belongs to the class-II aminoacyl-tRNA synthetase family. Phe-tRNA synthetase alpha subunit type 1 subfamily. Tetramer of two alpha and two beta subunits. Requires Mg(2+) as cofactor.

It is found in the cytoplasm. It catalyses the reaction tRNA(Phe) + L-phenylalanine + ATP = L-phenylalanyl-tRNA(Phe) + AMP + diphosphate + H(+). This chain is Phenylalanine--tRNA ligase alpha subunit, found in Pseudoalteromonas atlantica (strain T6c / ATCC BAA-1087).